Here is a 365-residue protein sequence, read N- to C-terminus: Flagellar P-ring protein (365 aa).

The first 19 residues, 1 to 19 (MMLSLCAIAGLLLAPSIQA), serve as a signal peptide directing secretion.

This sequence belongs to the FlgI family. In terms of assembly, the basal body constitutes a major portion of the flagellar organelle and consists of four rings (L,P,S, and M) mounted on a central rod.

Its subcellular location is the periplasm. The protein localises to the bacterial flagellum basal body. Functionally, assembles around the rod to form the L-ring and probably protects the motor/basal body from shearing forces during rotation. The chain is Flagellar P-ring protein from Sodalis glossinidius (strain morsitans).